The following is a 166-amino-acid chain: Large ribosomal subunit protein uL10 (166 aa).

Belongs to the universal ribosomal protein uL10 family. As to quaternary structure, part of the ribosomal stalk of the 50S ribosomal subunit. The N-terminus interacts with L11 and the large rRNA to form the base of the stalk. The C-terminus forms an elongated spine to which L12 dimers bind in a sequential fashion forming a multimeric L10(L12)X complex.

In terms of biological role, forms part of the ribosomal stalk, playing a central role in the interaction of the ribosome with GTP-bound translation factors. This Streptococcus pneumoniae serotype 19F (strain G54) protein is Large ribosomal subunit protein uL10.